We begin with the raw amino-acid sequence, 239 residues long: Sugar fermentation stimulation protein homolog (239 aa).

It belongs to the SfsA family.

This is Sugar fermentation stimulation protein homolog from Shewanella woodyi (strain ATCC 51908 / MS32).